Consider the following 633-residue polypeptide: DNA mismatch repair protein MutL (633 aa).

Positions 338–407 (AAPEPERTLP…VPPPTLRAIP (70 aa)) are disordered. A compositionally biased stretch (low complexity) spans 366–391 (PGSAFPAAARPAPASSAAQPPLSSSA).

It belongs to the DNA mismatch repair MutL/HexB family.

This protein is involved in the repair of mismatches in DNA. It is required for dam-dependent methyl-directed DNA mismatch repair. May act as a 'molecular matchmaker', a protein that promotes the formation of a stable complex between two or more DNA-binding proteins in an ATP-dependent manner without itself being part of a final effector complex. The polypeptide is DNA mismatch repair protein MutL (Akkermansia muciniphila (strain ATCC BAA-835 / DSM 22959 / JCM 33894 / BCRC 81048 / CCUG 64013 / CIP 107961 / Muc)).